A 117-amino-acid polypeptide reads, in one-letter code: Immunoglobulin heavy variable 3-7 (117 aa).

The first 19 residues, methionine 1–cysteine 19, serve as a signal peptide directing secretion. Positions glutamate 20 to serine 44 are framework-1. In terms of domain architecture, Ig-like spans glutamate 20–arginine 117. Cysteines 41 and 115 form a disulfide. The interval glycine 45–tryptophan 52 is complementarity-determining-1. The interval methionine 53–asparagine 69 is framework-2. The tract at residues isoleucine 70 to lysine 77 is complementarity-determining-2. Residues tyrosine 78–cysteine 115 are framework-3. Positions alanine 116–arginine 117 are complementarity-determining-3.

In terms of assembly, immunoglobulins are composed of two identical heavy chains and two identical light chains; disulfide-linked.

It localises to the secreted. Its subcellular location is the cell membrane. V region of the variable domain of immunoglobulin heavy chains that participates in the antigen recognition. Immunoglobulins, also known as antibodies, are membrane-bound or secreted glycoproteins produced by B lymphocytes. In the recognition phase of humoral immunity, the membrane-bound immunoglobulins serve as receptors which, upon binding of a specific antigen, trigger the clonal expansion and differentiation of B lymphocytes into immunoglobulins-secreting plasma cells. Secreted immunoglobulins mediate the effector phase of humoral immunity, which results in the elimination of bound antigens. The antigen binding site is formed by the variable domain of one heavy chain, together with that of its associated light chain. Thus, each immunoglobulin has two antigen binding sites with remarkable affinity for a particular antigen. The variable domains are assembled by a process called V-(D)-J rearrangement and can then be subjected to somatic hypermutations which, after exposure to antigen and selection, allow affinity maturation for a particular antigen. This Homo sapiens (Human) protein is Immunoglobulin heavy variable 3-7.